The primary structure comprises 104 residues: uncharacterized protein (104 aa).

This sequence to M.jannaschii MJ1511.

This is an uncharacterized protein from Methanocaldococcus jannaschii (strain ATCC 43067 / DSM 2661 / JAL-1 / JCM 10045 / NBRC 100440) (Methanococcus jannaschii).